The following is a 223-amino-acid chain: Thiamine-phosphate synthase (223 aa).

4-amino-2-methyl-5-(diphosphooxymethyl)pyrimidine is bound by residues 47-51 and Asn84; that span reads QLRDK. Asp85 and Asp104 together coordinate Mg(2+). Residue Ser123 coordinates 4-amino-2-methyl-5-(diphosphooxymethyl)pyrimidine. Position 150 to 152 (150 to 152) interacts with 2-[(2R,5Z)-2-carboxy-4-methylthiazol-5(2H)-ylidene]ethyl phosphate; the sequence is TPT. Lys153 is a binding site for 4-amino-2-methyl-5-(diphosphooxymethyl)pyrimidine. 2-[(2R,5Z)-2-carboxy-4-methylthiazol-5(2H)-ylidene]ethyl phosphate is bound at residue Gly182.

The protein belongs to the thiamine-phosphate synthase family. Requires Mg(2+) as cofactor.

The catalysed reaction is 2-[(2R,5Z)-2-carboxy-4-methylthiazol-5(2H)-ylidene]ethyl phosphate + 4-amino-2-methyl-5-(diphosphooxymethyl)pyrimidine + 2 H(+) = thiamine phosphate + CO2 + diphosphate. The enzyme catalyses 2-(2-carboxy-4-methylthiazol-5-yl)ethyl phosphate + 4-amino-2-methyl-5-(diphosphooxymethyl)pyrimidine + 2 H(+) = thiamine phosphate + CO2 + diphosphate. It catalyses the reaction 4-methyl-5-(2-phosphooxyethyl)-thiazole + 4-amino-2-methyl-5-(diphosphooxymethyl)pyrimidine + H(+) = thiamine phosphate + diphosphate. Its pathway is cofactor biosynthesis; thiamine diphosphate biosynthesis; thiamine phosphate from 4-amino-2-methyl-5-diphosphomethylpyrimidine and 4-methyl-5-(2-phosphoethyl)-thiazole: step 1/1. In terms of biological role, condenses 4-methyl-5-(beta-hydroxyethyl)thiazole monophosphate (THZ-P) and 2-methyl-4-amino-5-hydroxymethyl pyrimidine pyrophosphate (HMP-PP) to form thiamine monophosphate (TMP). The chain is Thiamine-phosphate synthase from Saccharopolyspora erythraea (strain ATCC 11635 / DSM 40517 / JCM 4748 / NBRC 13426 / NCIMB 8594 / NRRL 2338).